The primary structure comprises 479 residues: Acyltransferase easC (479 aa).

His161 serves as the catalytic Proton acceptor.

The protein belongs to the plant acyltransferase family. Monomer.

It participates in antibiotic biosynthesis. In terms of biological role, acyltransferase; part of the gene cluster that mediates the biosynthesis of emericellamides, secondary metabolites acting as antibiotics. The biosynthesis of emericellamides initiates from the highly reducing polyketide synthase easB which catalyzes the formation of the linear polyketide chain. EasB produces several polyketides that can be further processed by the downstream enzymes. The polyketides are released from easB as linear polyketide carboxylic acids, which are converted to CoA thioesters by the acyl-CoA ligase easD. The substrates are then loaded onto the acyltransferase easC, which shuttles them to the first thiolation (T) domain of the nonribosomal peptide synthetase easA. EasA then performs condensation of the polyketides with one glycine, two alanine, one valine and one leucine residues. A last step of cyclization leads to the production of emericellamides. In Emericella nidulans (strain FGSC A4 / ATCC 38163 / CBS 112.46 / NRRL 194 / M139) (Aspergillus nidulans), this protein is Acyltransferase easC.